Here is a 335-residue protein sequence, read N- to C-terminus: D-alanine--D-alanine ligase (335 aa).

Positions 124 to 330 (KMWFSALGVP…FTEYLSDVIS (207 aa)) constitute an ATP-grasp domain. 154–209 (AFDTWGSVFIKAASQGSSVGCYKVDVRDNIAKVLEEAFGYAPYVVVEKTIKARELE) is a binding site for ATP. Residues aspartate 284, glutamate 297, and asparagine 299 each coordinate Mg(2+).

This sequence belongs to the D-alanine--D-alanine ligase family. The cofactor is Mg(2+). Requires Mn(2+) as cofactor.

The protein localises to the cytoplasm. It catalyses the reaction 2 D-alanine + ATP = D-alanyl-D-alanine + ADP + phosphate + H(+). The protein operates within cell wall biogenesis; peptidoglycan biosynthesis. Functionally, cell wall formation. In Shewanella denitrificans (strain OS217 / ATCC BAA-1090 / DSM 15013), this protein is D-alanine--D-alanine ligase.